Reading from the N-terminus, the 394-residue chain is Probable ribosome production factor 1 (394 aa).

Disordered stretches follow at residues 1–98 (MIKI…PVLN) and 116–152 (MKKE…EKDQ). 2 stretches are compositionally biased toward acidic residues: residues 15–33 (QDSD…DLEV) and 59–88 (ASED…DDDD). Residues 116–134 (MKKEKHKKKMQERRARRKA) are compositionally biased toward basic residues. The Brix domain maps to 185–369 (PKVLITFADN…LRSLQEGTFD (185 aa)). Residues 347–364 (VKLRELGPRFTLKLRSLQ) are RNA-binding.

The protein localises to the nucleus. Its subcellular location is the nucleolus. Its function is as follows. May be required for ribosome biogenesis. The polypeptide is Probable ribosome production factor 1 (Drosophila melanogaster (Fruit fly)).